A 260-amino-acid polypeptide reads, in one-letter code: Phosphate import ATP-binding protein PstB 5 (260 aa).

The ABC transporter domain occupies 9 to 255; the sequence is IKVKDLSFYY…PLDSRTRDYV (247 aa). Residue 41–48 participates in ATP binding; the sequence is GPSGCGKS.

This sequence belongs to the ABC transporter superfamily. Phosphate importer (TC 3.A.1.7) family. As to quaternary structure, the complex is composed of two ATP-binding proteins (PstB), two transmembrane proteins (PstC and PstA) and a solute-binding protein (PstS).

The protein localises to the cell inner membrane. The enzyme catalyses phosphate(out) + ATP + H2O = ADP + 2 phosphate(in) + H(+). In terms of biological role, part of the ABC transporter complex PstSACB involved in phosphate import. Responsible for energy coupling to the transport system. The polypeptide is Phosphate import ATP-binding protein PstB 5 (Trichormus variabilis (strain ATCC 29413 / PCC 7937) (Anabaena variabilis)).